The sequence spans 212 residues: ATP-dependent dethiobiotin synthetase BioD (212 aa).

Position 13-18 (13-18 (GIGKTV)) interacts with ATP. Thr17 provides a ligand contact to Mg(2+). The active site involves Lys33. Substrate is bound at residue Ser37. Glu100 is a Mg(2+) binding site. ATP-binding positions include 100–103 (EGAG) and 184–186 (PLL).

Belongs to the dethiobiotin synthetase family. In terms of assembly, homodimer. It depends on Mg(2+) as a cofactor.

The protein localises to the cytoplasm. The enzyme catalyses (7R,8S)-7,8-diammoniononanoate + CO2 + ATP = (4R,5S)-dethiobiotin + ADP + phosphate + 3 H(+). It participates in cofactor biosynthesis; biotin biosynthesis; biotin from 7,8-diaminononanoate: step 1/2. Functionally, catalyzes a mechanistically unusual reaction, the ATP-dependent insertion of CO2 between the N7 and N8 nitrogen atoms of 7,8-diaminopelargonic acid (DAPA, also called 7,8-diammoniononanoate) to form a ureido ring. This is ATP-dependent dethiobiotin synthetase BioD from Brucella canis (strain ATCC 23365 / NCTC 10854 / RM-666).